Reading from the N-terminus, the 657-residue chain is Replication restart protein PriA (657 aa).

The 167-residue stretch at 143–309 (ITASTGARSF…LRGAVRRLPL (167 aa)) folds into the Helicase ATP-binding domain. 156–163 (GVTGSGKT) is an ATP binding site. Residues 252–255 (DEEH) carry the DEAH box motif. C366, C369, C375, C378, C393, C396, C406, and C409 together coordinate Zn(2+). The Helicase C-terminal domain maps to 390-570 (AMQCHYCGRQ…PFVRLIRFVF (181 aa)).

The protein belongs to the helicase family. PriA subfamily. As to quaternary structure, component of the replication restart primosome. The cofactor is Zn(2+).

It carries out the reaction Couples ATP hydrolysis with the unwinding of duplex DNA by translocating in the 3'-5' direction.. The enzyme catalyses ATP + H2O = ADP + phosphate + H(+). Functionally, initiates the restart of stalled replication forks, which reloads the replicative helicase on sites other than the origin of replication. Recognizes and binds to abandoned replication forks and remodels them to uncover a helicase loading site. Promotes assembly of the primosome at these replication forks. This is Replication restart protein PriA from Treponema pallidum (strain Nichols).